Reading from the N-terminus, the 504-residue chain is Signal transduction histidine-protein kinase/phosphatase MprB (504 aa).

Residues 1–26 are Cytoplasmic-facing; the sequence is MWWFRRRDRAPLRATSSLSLRWRVML. The helical transmembrane segment at 27–47 threads the bilayer; it reads LAMSMVAMVVVLMSFAVYAVI. Residues 48–163 lie on the Extracellular side of the membrane; the sequence is SAALYSDIDN…PTEAVMNKLR (116 aa). A helical membrane pass occupies residues 164–184; the sequence is WVLLIVGGIGVAVAAVAGGMV. The Cytoplasmic portion of the chain corresponds to 185-504; sequence TRAGLRPVGR…SVESQSTRAT (320 aa). An HAMP domain is found at 186–238; that stretch reads RAGLRPVGRLTEAAERVARTDDLRPIPVFGSDELARLTEAFNLMLRALAESRE. Residues 246–466 enclose the Histidine kinase domain; sequence DAGHELRTPL…SIYVLLPGRR (221 aa). Histidine 249 is subject to Phosphohistidine; by autocatalysis. Positions 471-504 are disordered; sequence QLPGATAGARSTDIENSRGSANVISVESQSTRAT. Positions 487-504 are enriched in polar residues; that stretch reads SRGSANVISVESQSTRAT.

Mg(2+) serves as cofactor. Mn(2+) is required as a cofactor. Autophosphorylated.

Its subcellular location is the cell membrane. It carries out the reaction ATP + protein L-histidine = ADP + protein N-phospho-L-histidine.. Member of the two-component regulatory system MprB/MprA which contributes to maintaining a balance among several systems involved in stress resistance and is required for establishment and maintenance of persistent infection in the host. In response to environmental signals MprB acts both as a membrane-associated protein kinase that undergoes autophosphorylation and subsequently transfers the phosphate to MprA, and a protein phosphatase that dephosphorylates phospho-MprA. MprB/MprA up-regulates expression of mprA and pepD. The polypeptide is Signal transduction histidine-protein kinase/phosphatase MprB (mprB) (Mycobacterium bovis (strain ATCC BAA-935 / AF2122/97)).